The following is a 53-amino-acid chain: UPF0391 membrane protein BP1737 (53 aa).

The next 2 helical transmembrane spans lie at 5 to 25 and 30 to 50; these read AVVF…GIAA and IAKI…LGGV.

It belongs to the UPF0391 family.

The protein resides in the cell membrane. The polypeptide is UPF0391 membrane protein BP1737 (Bordetella pertussis (strain Tohama I / ATCC BAA-589 / NCTC 13251)).